Here is a 311-residue protein sequence, read N- to C-terminus: NEDD4 family-interacting protein 2 (311 aa).

Residues 1–133 (RRSASDAELS…PPYSSITVEA (133 aa)) form a disordered region. The Cytoplasmic portion of the chain corresponds to 1–206 (RRSASDAELS…VEQLRVGNDG (206 aa)). The segment covering 7–22 (AELSAGAEGATGSEAA) has biased composition (low complexity). A compositionally biased stretch (gly residues) spans 26-37 (DLGGRTRGGGRG). Residues 38-47 (SAAAAATTST) are compositionally biased toward low complexity. A compositionally biased stretch (basic and acidic residues) spans 48 to 75 (REAEGAERRGDTPARKPDPEAGRMDHHQ). Residues 92 to 101 (ESSAVEQPST) show a composition bias toward polar residues. A compositionally biased stretch (low complexity) spans 102–120 (SSLAAPTVEAAASAPALDP). The segment at 123–126 (PPPY) is interaction with NEDD4. Residues 123-126 (PPPY) carry the PPxY motif 1 motif. Residues tyrosine 126, tyrosine 142, tyrosine 146, and tyrosine 152 each carry the phosphotyrosine; by SRC modification. 2 short sequence motifs (PPxY motif) span residues 149 to 152 (PPPY) and 159 to 161 (PTY). The helical transmembrane segment at 207–227 (IFMLAFFMAFIFNWLGFCLSF) threads the bilayer. The Extracellular portion of the chain corresponds to 228 to 232 (CITNT). Residues 233 to 253 (IAGRYGAICGFGLSLIKWILI) traverse the membrane as a helical segment. The Cytoplasmic portion of the chain corresponds to 254–262 (VRFSDYFTG). Residues 263 to 283 (YFNGQYWLWWIFLVLGLLLFF) form a helical membrane-spanning segment. The Extracellular segment spans residues 284 to 311 (RGFVNYLKVRNMSESMAAAHRTRYFFLL).

Forms heterodimers with NDFIP1. Interacts with HECT domain-containing E3 ubiquitin-protein ligases, including NEDD4. Interacts with NEDD4L. When phosphorylated at Tyr-142, interacts with SRC and LYN SH2 domain. May thus act as a scaffold that recruits SRC to NDFIP1, enhancing NDFIP1 phosphorylation. Interacts with SLC11A2/DMT1. May interact with phosphorylated EGFR. Interacts with KCNH2. Post-translationally, ubiquitinated by NEDD4 and NEDD4L; which does not affect turnover. Also ubiquitinated by ITCH. Undergoes transient tyrosine-phosphorylation following EGF stimulation, most probably catalyzed by SRC. Phosphorylation on Tyr-126, Tyr-146 and Tyr-152 are dependent on the phosphorylation on Tyr-142. Also phosphorylated by LYN and FYN. Ubiquitously expressed, with highest levels in brain, liver, kidney and testis.

The protein resides in the endosome membrane. It localises to the golgi apparatus membrane. The protein localises to the endosome. Its subcellular location is the multivesicular body membrane. In terms of biological role, activates HECT domain-containing E3 ubiquitin-protein ligases, including ITCH, NEDD4, NEDD4L, SMURF2, WWP1 and WWP2, and consequently modulates the stability of their targets. As a result, may control many cellular processes. Recruits ITCH, NEDD4 and SMURF2 to endosomal membranes. Negatively regulates KCNH2 potassium channel activity by decreasing its cell-surface expression and interfering with channel maturation through recruitment of NEDD4L to the Golgi apparatus and multivesicular body where it mediates KCNH2 degradation. May modulate EGFR signaling. Together with NDFIP1, limits the cytokine signaling and expansion of effector Th2 T-cells by promoting degradation of JAK1, probably by ITCH- and NEDD4L-mediated ubiquitination. The chain is NEDD4 family-interacting protein 2 (Ndfip2) from Mus musculus (Mouse).